A 648-amino-acid chain; its full sequence is Siderophore transporter MYCGRDRAFT_70577 (648 aa).

Composition is skewed to basic and acidic residues over residues 1–11 and 29–46; these read MRTSSESHSRS and SASK…DTSI. Residues 1–58 are disordered; the sequence is MRTSSESHSRSDAFNGKNDASQVTVDSDSASKDHHDHDHHHKDTSINERQSQHVHQQA. Residues 47-58 show a composition bias toward polar residues; that stretch reads NERQSQHVHQQA. The next 11 membrane-spanning stretches (helical) occupy residues 79 to 99, 151 to 171, 205 to 225, 236 to 256, 303 to 323, 336 to 356, 409 to 429, 438 to 458, 468 to 488, 500 to 520, and 578 to 598; these read LLLY…ALDQ, VVVL…QGLA, AFWS…NGFI, WGLG…IWTL, LIGL…LNLA, IAML…EALL, TIFI…GGLI, TLMV…LDGN, LAVS…ARVG, VVIS…STIA, and GIIL…SCLM.

This sequence belongs to the major facilitator superfamily.

Its subcellular location is the cell membrane. Functionally, siderophore transporter; part of the gene cluster 14 that mediates the biosynthesis of a ferrichrome A-like siderophors which may contribute to organismal virulence. This chain is Siderophore transporter MYCGRDRAFT_70577, found in Zymoseptoria tritici (strain CBS 115943 / IPO323) (Speckled leaf blotch fungus).